Consider the following 451-residue polypeptide: Tubulin beta chain (451 aa).

Residues glutamine 11, glutamate 69, serine 138, glycine 142, threonine 143, glycine 144, asparagine 204, and asparagine 226 each coordinate GTP. Glutamate 69 is a Mg(2+) binding site. Residues 426-451 (QDATAEEEGEFDENEGAEGEEQPADY) form a disordered region. The span at 429 to 451 (TAEEEGEFDENEGAEGEEQPADY) shows a compositional bias: acidic residues.

This sequence belongs to the tubulin family. In terms of assembly, dimer of alpha and beta chains. A typical microtubule is a hollow water-filled tube with an outer diameter of 25 nm and an inner diameter of 15 nM. Alpha-beta heterodimers associate head-to-tail to form protofilaments running lengthwise along the microtubule wall with the beta-tubulin subunit facing the microtubule plus end conferring a structural polarity. Microtubules usually have 13 protofilaments but different protofilament numbers can be found in some organisms and specialized cells. Mg(2+) is required as a cofactor.

Its subcellular location is the cytoplasm. The protein localises to the cytoskeleton. In terms of biological role, tubulin is the major constituent of microtubules, a cylinder consisting of laterally associated linear protofilaments composed of alpha- and beta-tubulin heterodimers. Microtubules grow by the addition of GTP-tubulin dimers to the microtubule end, where a stabilizing cap forms. Below the cap, tubulin dimers are in GDP-bound state, owing to GTPase activity of alpha-tubulin. The sequence is that of Tubulin beta chain from Naegleria pringsheimi (Amoeba).